Reading from the N-terminus, the 217-residue chain is Homologous-pairing protein 2 homolog (217 aa).

Residues 93–153 (IVALTAKVQS…LKNIKAATNH (61 aa)) adopt a coiled-coil conformation. Residues 118–182 (SSALTTPEMQ…WRKRKRMATE (65 aa)) form a DNA-binding region.

The protein belongs to the HOP2 family. As to quaternary structure, interacts with the DNA-binding domain of the nuclear receptors NR3C1/GR, ESR2/ER-beta, THRB and RXRA. Forms a stable heterodimer with MND1. Interacts with PSMC3/TBP1. In terms of processing, PTM: Phosphorylated by PKA, PKC and MAPK. As to expression, highly expressed in testis and colon.

The protein resides in the nucleus. In terms of biological role, plays an important role in meiotic recombination. Stimulates DMC1-mediated strand exchange required for pairing homologous chromosomes during meiosis. The complex PSMC3IP/MND1 binds DNA, stimulates the recombinase activity of DMC1 as well as DMC1 D-loop formation from double-strand DNA. This complex stabilizes presynaptic RAD51 and DMC1 filaments formed on single strand DNA to capture double-strand DNA. This complex stimulates both synaptic and presynaptic critical steps in RAD51 and DMC1-promoted homologous pairing. May inhibit HIV-1 viral protein TAT activity and modulate the activity of proteasomes through association with PSMC3. Acts as a tissue specific coactivator of hormone-dependent transcription mediated by nuclear receptors. This Homo sapiens (Human) protein is Homologous-pairing protein 2 homolog (PSMC3IP).